A 533-amino-acid polypeptide reads, in one-letter code: ATP synthase F(1) complex catalytic subunit beta, mitochondrial (533 aa).

Residues 1-53 (MLGLAGRCSAAAASAARPALRRAAGPSHGFLPLLLSRGAGPAAAVGARRDHAA) constitute a mitochondrion transit peptide. ADP contacts are provided by G214, V215, G216, K217, T218, and V219. Residue G214 coordinates ATP. Residues G214, V215, G216, K217, and T218 each coordinate phosphate. 4 residues coordinate ATP: G216, K217, T218, and V219. A Mg(2+)-binding site is contributed by T218. E243 is a binding site for Mg(2+). Position 244 (R244) interacts with ATP.

Homotrimer. Component of the ATP synthase complex composed at least of ATP5F1A/subunit alpha, ATP5F1B/subunit beta, ATP5MC1/subunit c (homooctomer), MT-ATP6/subunit a, MT-ATP8/subunit 8, ATP5ME/subunit e, ATP5MF/subunit f, ATP5MG/subunit g, ATP5MK/subunit k, ATP5MJ/subunit j, ATP5F1C/subunit gamma, ATP5F1D/subunit delta, ATP5F1E/subunit epsilon, ATP5PF/subunit F6, ATP5PB/subunit b, ATP5PD/subunit d, ATP5PO/subunit OSCP. ATP synthase complex consists of a soluble F(1) head domain (subunits alpha(3) and beta(3)) - the catalytic core - and a membrane F(0) domain - the membrane proton channel (subunits c, a, 8, e, f, g, k and j). These two domains are linked by a central stalk (subunits gamma, delta, and epsilon) rotating inside the F1 region and a stationary peripheral stalk (subunits F6, b, d, and OSCP).

The protein localises to the mitochondrion inner membrane. It carries out the reaction ATP + H2O + 4 H(+)(in) = ADP + phosphate + 5 H(+)(out). In terms of biological role, catalytic subunit beta, of the mitochondrial membrane ATP synthase complex (F(1)F(0) ATP synthase or Complex V) that produces ATP from ADP in the presence of a proton gradient across the membrane which is generated by electron transport complexes of the respiratory chain. ATP synthase complex consist of a soluble F(1) head domain - the catalytic core - and a membrane F(1) domain - the membrane proton channel. These two domains are linked by a central stalk rotating inside the F(1) region and a stationary peripheral stalk. During catalysis, ATP synthesis in the catalytic domain of F(1) is coupled via a rotary mechanism of the central stalk subunits to proton translocation. In vivo, can only synthesize ATP although its ATP hydrolase activity can be activated artificially in vitro. With the subunit alpha (ATP5F1A), forms the catalytic core in the F(1) domain. The polypeptide is ATP synthase F(1) complex catalytic subunit beta, mitochondrial (Gallus gallus (Chicken)).